The primary structure comprises 207 residues: Neuroendocrine protein 7B2 (207 aa).

Positions 1 to 22 (MVSTMLSGLVLWLTFGWTPALA) are cleaved as a signal peptide. Residues Cys116 and Cys125 are joined by a disulfide bond. Residues Ser136 and Ser200 each carry the phosphoserine modification. The tract at residues 168–207 (KGGQRRKRRSVNPYLQGQRLDNVVAKKSVPHFSDEDKDPE) is disordered.

The protein belongs to the 7B2 family. As to quaternary structure, interacts with PCSK2/PC2 early in the secretory pathway. Dissociation occurs at later stages. Post-translationally, proteolytically cleaved in the Golgi by a furin-like convertase to generate bioactive peptides. In terms of processing, sulfated on tyrosine residues.

The protein resides in the secreted. In terms of biological role, acts as a molecular chaperone for PCSK2/PC2, preventing its premature activation in the regulated secretory pathway. Binds to inactive PCSK2 in the endoplasmic reticulum and facilitates its transport from there to later compartments of the secretory pathway where it is proteolytically matured and activated. Also required for cleavage of PCSK2 but does not appear to be involved in its folding. Plays a role in regulating pituitary hormone secretion. The C-terminal peptide inhibits PCSK2 in vitro. The protein is Neuroendocrine protein 7B2 (SCG5) of Sus scrofa (Pig).